The primary structure comprises 94 residues: Co-chaperonin GroES (94 aa).

It belongs to the GroES chaperonin family. As to quaternary structure, heptamer of 7 subunits arranged in a ring. Interacts with the chaperonin GroEL.

The protein localises to the cytoplasm. Functionally, together with the chaperonin GroEL, plays an essential role in assisting protein folding. The GroEL-GroES system forms a nano-cage that allows encapsulation of the non-native substrate proteins and provides a physical environment optimized to promote and accelerate protein folding. GroES binds to the apical surface of the GroEL ring, thereby capping the opening of the GroEL channel. In Shouchella clausii (strain KSM-K16) (Alkalihalobacillus clausii), this protein is Co-chaperonin GroES.